Here is a 179-residue protein sequence, read N- to C-terminus: Large ribosomal subunit protein uL5 (179 aa).

This sequence belongs to the universal ribosomal protein uL5 family. Part of the 50S ribosomal subunit; part of the 5S rRNA/L5/L18/L25 subcomplex. Contacts the 5S rRNA and the P site tRNA. Forms a bridge to the 30S subunit in the 70S ribosome.

Functionally, this is one of the proteins that bind and probably mediate the attachment of the 5S RNA into the large ribosomal subunit, where it forms part of the central protuberance. In the 70S ribosome it contacts protein S13 of the 30S subunit (bridge B1b), connecting the 2 subunits; this bridge is implicated in subunit movement. Contacts the P site tRNA; the 5S rRNA and some of its associated proteins might help stabilize positioning of ribosome-bound tRNAs. This Glaesserella parasuis serovar 5 (strain SH0165) (Haemophilus parasuis) protein is Large ribosomal subunit protein uL5.